The sequence spans 426 residues: 3-phosphoshikimate 1-carboxyvinyltransferase (426 aa).

Lys22, Ser23, and Arg27 together coordinate 3-phosphoshikimate. Phosphoenolpyruvate is bound at residue Lys22. Phosphoenolpyruvate is bound by residues Gly96 and Arg124. Residues Ser170, Ser171, Gln172, Ser198, Asp314, Asn337, and Lys341 each coordinate 3-phosphoshikimate. Gln172 provides a ligand contact to phosphoenolpyruvate. The active-site Proton acceptor is Asp314. Phosphoenolpyruvate-binding residues include Arg345, Arg387, and Lys412.

The protein belongs to the EPSP synthase family. In terms of assembly, monomer.

The protein resides in the cytoplasm. The enzyme catalyses 3-phosphoshikimate + phosphoenolpyruvate = 5-O-(1-carboxyvinyl)-3-phosphoshikimate + phosphate. The protein operates within metabolic intermediate biosynthesis; chorismate biosynthesis; chorismate from D-erythrose 4-phosphate and phosphoenolpyruvate: step 6/7. Catalyzes the transfer of the enolpyruvyl moiety of phosphoenolpyruvate (PEP) to the 5-hydroxyl of shikimate-3-phosphate (S3P) to produce enolpyruvyl shikimate-3-phosphate and inorganic phosphate. This is 3-phosphoshikimate 1-carboxyvinyltransferase from Aliivibrio fischeri (strain ATCC 700601 / ES114) (Vibrio fischeri).